Consider the following 206-residue polypeptide: FKBP-type 22 kDa peptidyl-prolyl cis-trans isomerase (206 aa).

The PPIase FKBP-type domain maps to 120-206 (TDRVRVHYTG…VFEVELLEIL (87 aa)).

As to quaternary structure, homodimer.

It localises to the cytoplasm. Its subcellular location is the periplasm. The enzyme catalyses [protein]-peptidylproline (omega=180) = [protein]-peptidylproline (omega=0). Its activity is regulated as follows. Strongly inhibited by FK506. PPIases accelerate the folding of proteins. Catalyzes the cis-trans isomerization of proline imidic peptide bonds in oligopeptides. Displays a preference for substrates with a lysyl residue in the P1 position. This chain is FKBP-type 22 kDa peptidyl-prolyl cis-trans isomerase (fklB), found in Escherichia coli (strain K12).